The following is a 137-amino-acid chain: Small ribosomal subunit protein uS12 (137 aa).

Residues 1-57 (MPTINQLVRKPRKSKTKQSDSPVLNRGFNSKKKQFTNLNSPQKRGVCTRVGTMTPRK) form a disordered region. Residue Asp-102 is modified to 3-methylthioaspartic acid. A disordered region spans residues 118–137 (SGVDGRRQGRSLYGTKKPKN).

Belongs to the universal ribosomal protein uS12 family. In terms of assembly, part of the 30S ribosomal subunit. Contacts proteins S8 and S17. May interact with IF1 in the 30S initiation complex.

With S4 and S5 plays an important role in translational accuracy. In terms of biological role, interacts with and stabilizes bases of the 16S rRNA that are involved in tRNA selection in the A site and with the mRNA backbone. Located at the interface of the 30S and 50S subunits, it traverses the body of the 30S subunit contacting proteins on the other side and probably holding the rRNA structure together. The combined cluster of proteins S8, S12 and S17 appears to hold together the shoulder and platform of the 30S subunit. This is Small ribosomal subunit protein uS12 from Staphylococcus epidermidis (strain ATCC 12228 / FDA PCI 1200).